Consider the following 178-residue polypeptide: Interleukin-10 (178 aa).

A signal peptide spans 1–18 (MHSSALLCCLVVLTGVRA). 2 disulfides stabilise this stretch: cysteine 30–cysteine 126 and cysteine 80–cysteine 132. Asparagine 134 carries N-linked (GlcNAc...) asparagine glycosylation.

This sequence belongs to the IL-10 family. Homodimer. Interacts with IL10RA and IL10RB.

Its subcellular location is the secreted. Functionally, major immune regulatory cytokine that acts on many cells of the immune system where it has profound anti-inflammatory functions, limiting excessive tissue disruption caused by inflammation. Mechanistically, IL10 binds to its heterotetrameric receptor comprising IL10RA and IL10RB leading to JAK1 and STAT2-mediated phosphorylation of STAT3. In turn, STAT3 translocates to the nucleus where it drives expression of anti-inflammatory mediators. Targets antigen-presenting cells (APCs) such as macrophages and monocytes and inhibits their release of pro-inflammatory cytokines including granulocyte-macrophage colony-stimulating factor /GM-CSF, granulocyte colony-stimulating factor/G-CSF, IL-1 alpha, IL-1 beta, IL-6, IL-8 and TNF-alpha. Also interferes with antigen presentation by reducing the expression of MHC-class II and co-stimulatory molecules, thereby inhibiting their ability to induce T cell activation. In addition, controls the inflammatory response of macrophages by reprogramming essential metabolic pathways including mTOR signaling. This chain is Interleukin-10 (IL10), found in Papio hamadryas (Hamadryas baboon).